Reading from the N-terminus, the 354-residue chain is Uroporphyrinogen decarboxylase (354 aa).

Residues 27-31, Asp77, Tyr154, Thr209, and His327 each bind substrate; that span reads RQAGR.

Belongs to the uroporphyrinogen decarboxylase family. As to quaternary structure, homodimer.

It is found in the cytoplasm. It carries out the reaction uroporphyrinogen III + 4 H(+) = coproporphyrinogen III + 4 CO2. It participates in porphyrin-containing compound metabolism; protoporphyrin-IX biosynthesis; coproporphyrinogen-III from 5-aminolevulinate: step 4/4. In terms of biological role, catalyzes the decarboxylation of four acetate groups of uroporphyrinogen-III to yield coproporphyrinogen-III. This chain is Uroporphyrinogen decarboxylase, found in Pseudomonas putida (strain W619).